A 577-amino-acid polypeptide reads, in one-letter code: MFS-type transporter CPUR_05422 (577 aa).

Positions 1–49 (MSAMSAMGKPEHGSATTSDLEHRATESSLEKQDVEAAPPGPVKPVDPSP) are disordered. A compositionally biased stretch (basic and acidic residues) spans 19–34 (DLEHRATESSLEKQDV). Residues 38–47 (PPGPVKPVDP) show a composition bias toward pro residues. The next 14 helical transmembrane spans lie at 52–72 (STLK…LVAV), 93–113 (DVGW…LLFG), 123–143 (VVLL…GAAP), 157–177 (VGSA…IPLA), 184–204 (GLMG…GGAF), 212–232 (WCFY…FFYF), 249–269 (ILSL…CLLL), 285–305 (IIVL…VQIC), 326–346 (FLTT…IPIW), 359–379 (GIQL…GGLL), 383–403 (IGYY…GAGL), 416–436 (VIGY…TPNL), 449–469 (MGIA…VAVG), and 525–545 (VFIV…CMEW). The disordered stretch occupies residues 554 to 577 (PPAGPPAGAPTESAPVETKAAGHT).

This sequence belongs to the major facilitator superfamily. TCR/Tet family.

Its subcellular location is the membrane. Its function is as follows. MFS-type transporter; part of the ergochrome gene cluster responsible for the typical purple-black color of the ergot sclerotia. The ergochrome gene cluster produces several ergot pigments including the yellow ergochrome secalonic acid and its derivatives, as well as the red anthraquinones endocrocin and clavorubin. The polypeptide is MFS-type transporter CPUR_05422 (Claviceps purpurea (strain 20.1) (Ergot fungus)).